A 72-amino-acid polypeptide reads, in one-letter code: Protein kish-A (72 aa).

A signal peptide spans 1 to 26; it reads MSAIFNFQSLLIVILLLICTCAYLRS. Residues 27-53 lie on the Extracellular side of the membrane; sequence LVPNLLDKNKTGVLGIFWKCARIGERK. N35 carries an N-linked (GlcNAc...) asparagine glycan. Residues 54-71 form a helical membrane-spanning segment; the sequence is SPYVAVCCVVMAFSILFM. A topological domain (cytoplasmic) is located at residue Q72.

Belongs to the KISH family.

The protein localises to the golgi apparatus membrane. Involved in the early part of the secretory pathway. The chain is Protein kish-A (tmem167a) from Xenopus laevis (African clawed frog).